The primary structure comprises 224 residues: Menaquinol:cytochrome c reductase cytochrome b subunit (224 aa).

Residues 37-57 form a helical membrane-spanning segment; the sequence is FSAFVYCFGGLTFFVTVIQVL. Heme b is bound at residue Tyr42. Heme c is bound at residue Cys43. The heme b site is built by Arg91, His94, His108, and Arg111. Transmembrane regions (helical) follow at residues 96 to 116, 126 to 146, and 195 to 215; these read WGAS…FFQG, WIVG…GYLL, and IHVF…FIMI. Residues His196 and His211 each coordinate heme b. Heme c-binding residues include Arg216 and Ile220. A heme b-binding site is contributed by Ser221.

It belongs to the cytochrome b family. In terms of assembly, the main subunits of the menaquinol:cytochrome c complex are a Rieske-type iron-sulfur protein (QcrA), a cytochrome b (QcrB) and a cytochrome c (QcrC). The cofactor is heme b. Heme c is required as a cofactor.

Its subcellular location is the cell membrane. In terms of biological role, component of the menaquinol:cytochrome c reductase complex. This chain is Menaquinol:cytochrome c reductase cytochrome b subunit, found in Bacillus subtilis (strain 168).